The sequence spans 65 residues: Large ribosomal subunit protein uL30 (65 aa).

It belongs to the universal ribosomal protein uL30 family. As to quaternary structure, part of the 50S ribosomal subunit.

The chain is Large ribosomal subunit protein uL30 from Mesorhizobium japonicum (strain LMG 29417 / CECT 9101 / MAFF 303099) (Mesorhizobium loti (strain MAFF 303099)).